The following is a 153-amino-acid chain: Aspartate carbamoyltransferase regulatory chain (153 aa).

Cys-109, Cys-114, Cys-138, and Cys-141 together coordinate Zn(2+).

It belongs to the PyrI family. As to quaternary structure, contains catalytic and regulatory chains. The cofactor is Zn(2+).

In terms of biological role, involved in allosteric regulation of aspartate carbamoyltransferase. This Shigella dysenteriae serotype 1 (strain Sd197) protein is Aspartate carbamoyltransferase regulatory chain.